Here is a 292-residue protein sequence, read N- to C-terminus: N-acetylneuraminate lyase (292 aa).

2 residues coordinate aceneuramate: Ser-47 and Thr-48. Catalysis depends on Tyr-136, which acts as the Proton donor. The active-site Schiff-base intermediate with substrate is Lys-164. 5 residues coordinate aceneuramate: Thr-166, Gly-188, Asp-190, Glu-191, and Ser-207.

The protein belongs to the DapA family. NanA subfamily. As to quaternary structure, homotetramer.

The protein localises to the cytoplasm. It catalyses the reaction aceneuramate = aldehydo-N-acetyl-D-mannosamine + pyruvate. It participates in amino-sugar metabolism; N-acetylneuraminate degradation; D-fructose 6-phosphate from N-acetylneuraminate: step 1/5. In terms of biological role, catalyzes the reversible aldol cleavage of N-acetylneuraminic acid (sialic acid; Neu5Ac) to form pyruvate and N-acetylmannosamine (ManNAc) via a Schiff base intermediate. This is N-acetylneuraminate lyase from Actinobacillus pleuropneumoniae serotype 3 (strain JL03).